The sequence spans 1073 residues: MSSGNTSSQNHSPVNNQPTRLKSPLPALHKDTQPNTSHQATNVLQAIEHARHFLPAQGPISVFVHHNTLHAFEDLPFEKAVIEGGRRFGCEPYLSEERYHQELLRGRISREDLREVLMADLQDDADKLVATFGTRYTLRLSMLQTELQPMPESGLSWVLAESELLKRFREEVPAPYREKTITQTRGWVMRHLEPITTDTTSSNPASPLPAPLQDRLKAAGESQIHRWNDQQWESFTLHALWETCQQGVEKAEVQTPNTASNDSLHRLMRGELGIDLKTKIDDVLIRFCGCFLDQGFADWKLPERENGFAKAFADLYLGRWAIRADWMKHVDASLREVQSPDWDAIQSIEQSLERMGISNNECEGFLSECLLSLRGWAGMIWQMETNGPFLANPIPEGSLNEYLAIRLILLAHAIEHFGKAKFNVGTASEILRLALKSADVRSASSVRSRTHTVFQLAQLGGWTPEQMLNMSSAQWRCLITEIESFASLDRRRLLHAAYERHYANQALDAISIHSRRRRELATNSRRRPAYAAIFCIDDREESFRRHLEEVAPDCRTASAAGFFAVAMYYQGADHASFRPLCPAIVKPQHYVREEPLFSSMAAGERRAVRRRRLGWFAHQVHQNSRTLIGGWVTGLFGAIATVPMVARILAPRLTSQIRESMGSLVRPPATELHLERLADAPGSDPASMGYSLDEMSQIVVRILQDIGMVDAFPPIIVFFGHGSGSLNNPHESAYNCGACSGGRGGPNARAFAVMANDPRVRRRVAEQGIELPDEVRFVGAYHNTCNDDVDYYDLDLLPRSLRELFRRIESDVIETRARNAHERARRFESAPLDLTPQEALEHVEERAEDLSQARPEYNHATNALVTVGRRDWSRGLFMDRRAFVTEYDPTVDDENGHILTRILQAAIPVCGGISLEYYFSTVDVEGYGCGSKLPHNVASMVGVMTGAASDLRPGLSQQMVEIHEPMRILFVIETTPEMLKKIISENEGIRRMVEGNWVQLAILDPSTYTIQRYIDGHFEPHVVTDREIPTVQSSMHWYRGQRDHLGFATIQESEIKTPVSSSESDANTSEVLV.

A compositionally biased stretch (polar residues) spans 1–20 (MSSGNTSSQNHSPVNNQPTR). The interval 1-35 (MSSGNTSSQNHSPVNNQPTRLKSPLPALHKDTQPN) is disordered. Residues Cys-535, Asp-537, His-721, and Cys-736 each contribute to the Zn(2+) site.

The protein belongs to the inorganic carbon transporter (TC 9.A.2) DabA family. In terms of assembly, forms a complex with DabB. The cofactor is Zn(2+).

The protein localises to the cell inner membrane. Part of an energy-coupled inorganic carbon pump. The protein is Probable inorganic carbon transporter subunit DabA 2 of Rhodopirellula baltica (strain DSM 10527 / NCIMB 13988 / SH1).